A 591-amino-acid chain; its full sequence is Aspartate--tRNA(Asp/Asn) ligase (591 aa).

Glu-176 is a binding site for L-aspartate. Residues 200 to 203 are aspartate; it reads QLFK. An L-aspartate-binding site is contributed by Arg-222. ATP is bound by residues 222–224 and Gln-231; that span reads RDE. His-450 provides a ligand contact to L-aspartate. Residue Glu-484 participates in ATP binding. Arg-491 contributes to the L-aspartate binding site. 536 to 539 is a binding site for ATP; that stretch reads GLDR.

It belongs to the class-II aminoacyl-tRNA synthetase family. Type 1 subfamily. In terms of assembly, homodimer.

Its subcellular location is the cytoplasm. It catalyses the reaction tRNA(Asx) + L-aspartate + ATP = L-aspartyl-tRNA(Asx) + AMP + diphosphate. Aspartyl-tRNA synthetase with relaxed tRNA specificity since it is able to aspartylate not only its cognate tRNA(Asp) but also tRNA(Asn). Reaction proceeds in two steps: L-aspartate is first activated by ATP to form Asp-AMP and then transferred to the acceptor end of tRNA(Asp/Asn). In Bacillus cereus (strain AH187), this protein is Aspartate--tRNA(Asp/Asn) ligase.